We begin with the raw amino-acid sequence, 180 residues long: Bifunctional protein PyrR (180 aa).

A PRPP-binding motif is present at residues 99–111 (VILVDDVLYTCRT).

The protein belongs to the purine/pyrimidine phosphoribosyltransferase family. PyrR subfamily. As to quaternary structure, homodimer and homohexamer; in equilibrium.

The enzyme catalyses UMP + diphosphate = 5-phospho-alpha-D-ribose 1-diphosphate + uracil. Its function is as follows. Regulates transcriptional attenuation of the pyrimidine nucleotide (pyr) operon by binding in a uridine-dependent manner to specific sites on pyr mRNA. This disrupts an antiterminator hairpin in the RNA and favors formation of a downstream transcription terminator, leading to a reduced expression of downstream genes. Functionally, also displays a weak uracil phosphoribosyltransferase activity which is not physiologically significant. The sequence is that of Bifunctional protein PyrR from Clostridium botulinum (strain Eklund 17B / Type B).